Reading from the N-terminus, the 308-residue chain is UDP-N-acetylenolpyruvoylglucosamine reductase 2 (308 aa).

An FAD-binding PCMH-type domain is found at 31-197; that stretch reads RIGGPADYLV…AEVVMALRPA (167 aa). The active site involves arginine 176. Serine 226 acts as the Proton donor in catalysis. Residue glutamate 296 is part of the active site.

This sequence belongs to the MurB family. FAD serves as cofactor.

Its subcellular location is the cytoplasm. The catalysed reaction is UDP-N-acetyl-alpha-D-muramate + NADP(+) = UDP-N-acetyl-3-O-(1-carboxyvinyl)-alpha-D-glucosamine + NADPH + H(+). The protein operates within cell wall biogenesis; peptidoglycan biosynthesis. In terms of biological role, cell wall formation. The polypeptide is UDP-N-acetylenolpyruvoylglucosamine reductase 2 (Symbiobacterium thermophilum (strain DSM 24528 / JCM 14929 / IAM 14863 / T)).